We begin with the raw amino-acid sequence, 491 residues long: UDP-N-acetylmuramate--L-alanine ligase (491 aa).

126-132 (GTHGKTT) is an ATP binding site.

The protein belongs to the MurCDEF family.

The protein localises to the cytoplasm. The catalysed reaction is UDP-N-acetyl-alpha-D-muramate + L-alanine + ATP = UDP-N-acetyl-alpha-D-muramoyl-L-alanine + ADP + phosphate + H(+). It functions in the pathway cell wall biogenesis; peptidoglycan biosynthesis. In terms of biological role, cell wall formation. The sequence is that of UDP-N-acetylmuramate--L-alanine ligase from Shigella flexneri serotype 5b (strain 8401).